A 258-amino-acid chain; its full sequence is NAD kinase (258 aa).

Asp-45 functions as the Proton acceptor in the catalytic mechanism. NAD(+) is bound by residues 45-46, 117-118, Asp-147, Ala-155, 158-163, and Ala-182; these read DG, NE, and TAYNYS.

Belongs to the NAD kinase family. Requires a divalent metal cation as cofactor.

It is found in the cytoplasm. It carries out the reaction NAD(+) + ATP = ADP + NADP(+) + H(+). Involved in the regulation of the intracellular balance of NAD and NADP, and is a key enzyme in the biosynthesis of NADP. Catalyzes specifically the phosphorylation on 2'-hydroxyl of the adenosine moiety of NAD to yield NADP. This is NAD kinase from Xanthomonas campestris pv. campestris (strain 8004).